The sequence spans 221 residues: MPAKLGYWKIRGLQQPVRLLLEYGEKYEEQIYERDDGEKWFSKKFELGLDLPNLPYYIDDKCKLTQSLAILRYIADKHGMIGSTPEERARVSMIEGAAVDLRQGLSRISYDPKFEQLKEGYLKDLPTTMKMWSDFLGKNPYLRGTSVSHVDFMVYEALDAIRYLEPHCLDHFPNLQQFMSRIEALPSIKAYMESNRFIKWPLNGWHAQFGGGDAPPSHEKK.

The region spanning 2–82 is the GST N-terminal domain; it reads PAKLGYWKIR…YIADKHGMIG (81 aa). Residues 7 to 8, 40 to 44, 53 to 54, and 66 to 67 each bind glutathione; these read YW, WFSKK, NL, and QS. In terms of domain architecture, GST C-terminal spans 84–202; sequence TPEERARVSM…ESNRFIKWPL (119 aa). Position 110 (tyrosine 110) interacts with substrate.

This sequence belongs to the GST superfamily. Mu family. Homodimer.

It carries out the reaction RX + glutathione = an S-substituted glutathione + a halide anion + H(+). Conjugation of reduced glutathione to a wide number of exogenous and endogenous hydrophobic electrophiles. In terms of biological role, GST isoenzymes appear to play a central role in the parasite detoxification system. Other functions are also suspected including a role in increasing the solubility of haematin in the parasite gut. In Fasciola hepatica (Liver fluke), this protein is Glutathione S-transferase class-mu 26 kDa isozyme 1.